We begin with the raw amino-acid sequence, 304 residues long: Homoserine kinase (304 aa).

Residue 86 to 96 (PLARGLGSSAA) coordinates ATP.

It belongs to the GHMP kinase family. Homoserine kinase subfamily.

The protein resides in the cytoplasm. The enzyme catalyses L-homoserine + ATP = O-phospho-L-homoserine + ADP + H(+). It participates in amino-acid biosynthesis; L-threonine biosynthesis; L-threonine from L-aspartate: step 4/5. Functionally, catalyzes the ATP-dependent phosphorylation of L-homoserine to L-homoserine phosphate. The sequence is that of Homoserine kinase from Carboxydothermus hydrogenoformans (strain ATCC BAA-161 / DSM 6008 / Z-2901).